Consider the following 352-residue polypeptide: Carbohydrate sulfotransferase 11 (352 aa).

Over 1 to 16 the chain is Cytoplasmic; that stretch reads MKQTILDLMRMSRICR. The chain crosses the membrane as a helical; Signal-anchor for type II membrane protein span at residues 17–37; the sequence is MVLATCLGSFILVIFYFQSMF. At 38-352 the chain is on the lumenal side; sequence QPVMRRNPFA…YSIPSYLKLQ (315 aa). Residues 124-130 and 186-194 each bind 3'-phosphoadenylyl sulfate; these read PKVACTN and REPFERLVS. N-linked (GlcNAc...) asparagine glycans are attached at residues Asn205, Asn223, Asn321, and Asn342.

Belongs to the sulfotransferase 2 family.

It localises to the golgi apparatus membrane. The catalysed reaction is chondroitin beta-D-glucuronate + n 3'-phosphoadenylyl sulfate = chondroitin 4'-sulfate + n adenosine 3',5'-bisphosphate + n H(+). Catalyzes the transfer of sulfate to position 4 of the N-acetylgalactosamine (GalNAc) residue of chondroitin. The polypeptide is Carbohydrate sulfotransferase 11 (chst11) (Danio rerio (Zebrafish)).